The following is a 566-amino-acid chain: Erythroid membrane-associated protein (566 aa).

The N-terminal stretch at 1–29 (MERPSPCGSWLVGCLFTIAVFQPPVQVLG) is a signal peptide. The Ig-like V-type domain maps to 30 to 139 (DAGKVYIAPL…SSREDNVTLQ (110 aa)). Topologically, residues 30 to 246 (DAGKVYIAPL…PERGSLSSPA (217 aa)) are extracellular. C47 and C123 are disulfide-bonded. N-linked (GlcNAc...) asparagine glycans are attached at residues N135 and N214. Residues 247 to 267 (VALSVVLPVLGLLILLGIWLI) traverse the membrane as a helical segment. Over 268–566 (CKQKKSKEKL…ALKGLKVPSL (299 aa)) the chain is Cytoplasmic. Positions 311–509 (KLKRAAANAG…LIICTELQKS (199 aa)) constitute a B30.2/SPRY domain. S509 is subject to Phosphoserine.

It belongs to the immunoglobulin superfamily. BTN/MOG family. In terms of processing, glycosylated. In terms of tissue distribution, expressed in spleen and bone marrow.

It localises to the cell membrane. The protein localises to the cytoplasm. In terms of biological role, possible role as a cell-adhesion or receptor molecule of erythroid cells. The polypeptide is Erythroid membrane-associated protein (Ermap) (Mus musculus (Mouse)).